The following is a 158-amino-acid chain: MNNKTNNNSVLFDLADGAVRPLGFEVLEVTQQREGRDLIVLVRIDRLDEQPVTMDDLTAASRAAEAEFDRVDPIEEEYRLEFESPGGKRPLLRARHFERMIGLKAKVRSLPGRGEHNFTAPIKAVEGDTVTFEHGGEDLSVNVADIQASLAEFPDRHR.

Belongs to the RimP family.

The protein resides in the cytoplasm. Required for maturation of 30S ribosomal subunits. In Deinococcus radiodurans (strain ATCC 13939 / DSM 20539 / JCM 16871 / CCUG 27074 / LMG 4051 / NBRC 15346 / NCIMB 9279 / VKM B-1422 / R1), this protein is Ribosome maturation factor RimP.